Consider the following 64-residue polypeptide: Small ribosomal subunit protein eS17 (64 aa).

This sequence belongs to the eukaryotic ribosomal protein eS17 family.

This chain is Small ribosomal subunit protein eS17, found in Methanospirillum hungatei JF-1 (strain ATCC 27890 / DSM 864 / NBRC 100397 / JF-1).